The sequence spans 613 residues: Probable inactive purple acid phosphatase 1 (613 aa).

Positions Met-1 to Ser-24 are cleaved as a signal peptide. Residues Asn-89 and Asn-116 are each glycosylated (N-linked (GlcNAc...) asparagine). Asp-295 serves as a coordination point for Fe cation. An N-linked (GlcNAc...) asparagine glycan is attached at Asn-316. Fe cation contacts are provided by Asp-336 and Tyr-339. Asp-336 contributes to the Zn(2+) binding site. Positions 369, 458, and 500 each coordinate Zn(2+). Asn-369 contributes to the substrate binding site. Residue His-500–His-502 participates in substrate binding. His-502 lines the Fe cation pocket. Asn-528 and Asn-551 each carry an N-linked (GlcNAc...) asparagine glycan.

The protein belongs to the metallophosphoesterase superfamily. Purple acid phosphatase family. Homodimer. It depends on Fe cation as a cofactor. Requires Zn(2+) as cofactor. In terms of tissue distribution, expressed in roots, stems, leaves, flowers and siliques.

The protein resides in the secreted. The chain is Probable inactive purple acid phosphatase 1 (PAP1) from Arabidopsis thaliana (Mouse-ear cress).